We begin with the raw amino-acid sequence, 103 residues long: Small ribosomal subunit protein uS10 (103 aa).

This sequence belongs to the universal ribosomal protein uS10 family. In terms of assembly, part of the 30S ribosomal subunit.

Its function is as follows. Involved in the binding of tRNA to the ribosomes. The chain is Small ribosomal subunit protein uS10 from Nitratiruptor sp. (strain SB155-2).